Consider the following 498-residue polypeptide: ATP synthase subunit beta, chloroplastic (498 aa).

Gly-172 to Thr-179 serves as a coordination point for ATP.

It belongs to the ATPase alpha/beta chains family. As to quaternary structure, F-type ATPases have 2 components, CF(1) - the catalytic core - and CF(0) - the membrane proton channel. CF(1) has five subunits: alpha(3), beta(3), gamma(1), delta(1), epsilon(1). CF(0) has four main subunits: a(1), b(1), b'(1) and c(9-12).

It is found in the plastid. The protein localises to the chloroplast thylakoid membrane. The catalysed reaction is ATP + H2O + 4 H(+)(in) = ADP + phosphate + 5 H(+)(out). Functionally, produces ATP from ADP in the presence of a proton gradient across the membrane. The catalytic sites are hosted primarily by the beta subunits. This Beta vulgaris (Sugar beet) protein is ATP synthase subunit beta, chloroplastic.